The primary structure comprises 256 residues: Thiazole synthase (256 aa).

The active-site Schiff-base intermediate with DXP is the Lys-95. Residues Gly-156, Ala-182–Gly-183, and Asn-204–Thr-205 each bind 1-deoxy-D-xylulose 5-phosphate.

Belongs to the ThiG family. In terms of assembly, homotetramer. Forms heterodimers with either ThiH or ThiS.

It is found in the cytoplasm. It catalyses the reaction [ThiS sulfur-carrier protein]-C-terminal-Gly-aminoethanethioate + 2-iminoacetate + 1-deoxy-D-xylulose 5-phosphate = [ThiS sulfur-carrier protein]-C-terminal Gly-Gly + 2-[(2R,5Z)-2-carboxy-4-methylthiazol-5(2H)-ylidene]ethyl phosphate + 2 H2O + H(+). The protein operates within cofactor biosynthesis; thiamine diphosphate biosynthesis. Catalyzes the rearrangement of 1-deoxy-D-xylulose 5-phosphate (DXP) to produce the thiazole phosphate moiety of thiamine. Sulfur is provided by the thiocarboxylate moiety of the carrier protein ThiS. In vitro, sulfur can be provided by H(2)S. The protein is Thiazole synthase of Salmonella enteritidis PT4 (strain P125109).